A 370-amino-acid polypeptide reads, in one-letter code: uncharacterized protein (370 aa).

Residues aspartate 152, histidine 154, aspartate 184, asparagine 215, histidine 306, and histidine 308 each contribute to the a divalent metal cation site.

It belongs to the metallophosphoesterase superfamily. It depends on a divalent metal cation as a cofactor.

This is an uncharacterized protein from Helicobacter pylori (strain ATCC 700392 / 26695) (Campylobacter pylori).